The sequence spans 239 residues: Prolyl hydroxylase EGLN3 (239 aa).

The interval 62-73 (AGPRAGVSKRHL) is beta(2)beta(3) 'finger-like' loop. The segment at 88–104 (CEAISFLLSLIDRLVLY) is required for interaction with ADRB2. Residues 116-214 (ERSKAMVACY…RYAMTVWYFD (99 aa)) enclose the Fe2OG dioxygenase domain. Fe cation-binding residues include H135, D137, and H196. R205 lines the 2-oxoglutarate pocket.

Interacts with BCL2 (via its BH4 domain); the interaction disrupts the BAX-BCL4 complex inhibiting the anti-apoptotic activity of BCL2. Interacts with WDR83; the interaction leads to almost complete elimination of HIF-mediated reporter activity. Interacts with ADRB2; the interaction hydroxylates ADRB2 facilitating its ubiquitination by the VHL-E3 ligase complex. Interacts with PAX2; the interaction targets PAX2 for destruction. Interacts with PKM; the interaction hydroxylates PKM in hypoxia. Interacts with LIMD1, WTIP and AJUBA. The cofactor is Fe(2+). It depends on L-ascorbate as a cofactor. Post-translationally, ubiquitinated by SIAH1 and/or SIAH2 in response to the unfolded protein response (UPR), leading to its degradation. In terms of tissue distribution, widely expressed at low levels. Expressed at higher levels in adult heart (cardiac myocytes, aortic endothelial cells and coronary artery smooth muscle), lung and placenta, and in fetal spleen, heart and skeletal muscle. Also expressed in pancreas. Localized to pancreatic acini and islet cells.

The protein localises to the nucleus. It is found in the cytoplasm. The enzyme catalyses L-prolyl-[protein] + 2-oxoglutarate + O2 = trans-4-hydroxy-L-prolyl-[protein] + succinate + CO2. It catalyses the reaction L-prolyl-[hypoxia-inducible factor alpha subunit] + 2-oxoglutarate + O2 = trans-4-hydroxy-L-prolyl-[hypoxia-inducible factor alpha subunit] + succinate + CO2. Its activity is regulated as follows. Activated in cardiovascular cells and Hela cells following exposure to hypoxia. Inhibited by polynitrogen compounds probably by chelation to Fe(2+) ions. Prolyl hydroxylase that mediates hydroxylation of proline residues in target proteins, such as PKM, TELO2, ATF4 and HIF1A. Target proteins are preferentially recognized via a LXXLAP motif. Cellular oxygen sensor that catalyzes, under normoxic conditions, the post-translational formation of 4-hydroxyproline in hypoxia-inducible factor (HIF) alpha proteins. Hydroxylates a specific proline found in each of the oxygen-dependent degradation (ODD) domains (N-terminal, NODD, and C-terminal, CODD) of HIF1A. Also hydroxylates HIF2A. Has a preference for the CODD site for both HIF1A and HIF2A. Hydroxylation on the NODD site by EGLN3 appears to require prior hydroxylation on the CODD site. Hydroxylated HIFs are then targeted for proteasomal degradation via the von Hippel-Lindau ubiquitination complex. Under hypoxic conditions, the hydroxylation reaction is attenuated allowing HIFs to escape degradation resulting in their translocation to the nucleus, heterodimerization with HIF1B, and increased expression of hypoxy-inducible genes. ELGN3 is the most important isozyme in limiting physiological activation of HIFs (particularly HIF2A) in hypoxia. Also hydroxylates PKM in hypoxia, limiting glycolysis. Under normoxia, hydroxylates and regulates the stability of ADRB2. Regulator of cardiomyocyte and neuronal apoptosis. In cardiomyocytes, inhibits the anti-apoptotic effect of BCL2 by disrupting the BAX-BCL2 complex. In neurons, has a NGF-induced proapoptotic effect, probably through regulating CASP3 activity. Also essential for hypoxic regulation of neutrophilic inflammation. Plays a crucial role in DNA damage response (DDR) by hydroxylating TELO2, promoting its interaction with ATR which is required for activation of the ATR/CHK1/p53 pathway. Also mediates hydroxylation of ATF4, leading to decreased protein stability of ATF4. The polypeptide is Prolyl hydroxylase EGLN3 (Homo sapiens (Human)).